The following is a 336-amino-acid chain: Probable ADP-ribosylation factor GTPase-activating protein AGD13 (336 aa).

An Arf-GAP domain is found at 15–137; it reads KRRIRDLLNQ…EFLKPSLRIT (123 aa). Residues 30–53 form a C4-type zinc finger; the sequence is CADCGASDPKWASANIGVFICLKC. A C2 domain is found at 162–280; sequence RTNSSSQTMF…AMAFGDPEMF (119 aa). The Ca(2+) site is built by Asp-249, Ser-252, and Asp-255.

Ca(2+) serves as cofactor.

In terms of biological role, GTPase-activating protein (GAP) for ADP ribosylation factor (ARF). This chain is Probable ADP-ribosylation factor GTPase-activating protein AGD13 (AGD13), found in Arabidopsis thaliana (Mouse-ear cress).